We begin with the raw amino-acid sequence, 430 residues long: Enolase (430 aa).

A (2R)-2-phosphoglycerate-binding site is contributed by Q167. Residue E209 is the Proton donor of the active site. The Mg(2+) site is built by D246, E289, and D316. Positions 341, 370, 371, and 392 each coordinate (2R)-2-phosphoglycerate. K341 functions as the Proton acceptor in the catalytic mechanism.

The protein belongs to the enolase family. In terms of assembly, component of the RNA degradosome, a multiprotein complex involved in RNA processing and mRNA degradation. The cofactor is Mg(2+).

The protein resides in the cytoplasm. It localises to the secreted. Its subcellular location is the cell surface. It carries out the reaction (2R)-2-phosphoglycerate = phosphoenolpyruvate + H2O. Its pathway is carbohydrate degradation; glycolysis; pyruvate from D-glyceraldehyde 3-phosphate: step 4/5. Functionally, catalyzes the reversible conversion of 2-phosphoglycerate (2-PG) into phosphoenolpyruvate (PEP). It is essential for the degradation of carbohydrates via glycolysis. The protein is Enolase of Idiomarina loihiensis (strain ATCC BAA-735 / DSM 15497 / L2-TR).